The primary structure comprises 311 residues: Aspartate carbamoyltransferase catalytic subunit (311 aa).

Carbamoyl phosphate is bound by residues Arg55 and Thr56. Lys85 serves as a coordination point for L-aspartate. Residues Arg106, His135, and Gln138 each coordinate carbamoyl phosphate. Residues Arg168 and Arg230 each coordinate L-aspartate. Positions 268 and 269 each coordinate carbamoyl phosphate.

This sequence belongs to the aspartate/ornithine carbamoyltransferase superfamily. ATCase family. As to quaternary structure, heterododecamer (2C3:3R2) of six catalytic PyrB chains organized as two trimers (C3), and six regulatory PyrI chains organized as three dimers (R2).

The catalysed reaction is carbamoyl phosphate + L-aspartate = N-carbamoyl-L-aspartate + phosphate + H(+). It functions in the pathway pyrimidine metabolism; UMP biosynthesis via de novo pathway; (S)-dihydroorotate from bicarbonate: step 2/3. Functionally, catalyzes the condensation of carbamoyl phosphate and aspartate to form carbamoyl aspartate and inorganic phosphate, the committed step in the de novo pyrimidine nucleotide biosynthesis pathway. The sequence is that of Aspartate carbamoyltransferase catalytic subunit from Salmonella arizonae (strain ATCC BAA-731 / CDC346-86 / RSK2980).